A 548-amino-acid chain; its full sequence is MFATVSLLFCLLLQPSPSAQQYHGEKGISVPDHGFCQPISIPLCTDIAYNQTIMPNLLGHTNQEDAGLEVHQFYPLVKVQCSPELRFFLCSMYAPVCTVLEQAIPPCRSLCERARQGCEALMNKFGFQWPERLRCENFPVHGAGEICVGQNTSDNSPSGPTARPTPYLPDSITFHPHPNRDFTCPRQLKVPPYLGYRFLGEKDCGAPCEPGKANGLMYFKEEEVRFARLWVGIWAILCGISTLFTVLTYLVDMRRFSYPERPIIFLSGCYFMVAVAYTAGFLLEERGVCVERFSEDSYRTVAQGTKKEGCTILFMILYFFGMASSIWWVILSLTWFLAAGMKWGHEAIEANSQYFHLAAWAVPAVKTITILAMGQVDGDILSGVCYVGINSVDSLRGFVLAPLFVYLFIGTSFLLAGFVSLFRIRTIMKHDGTKTEKLEKLMVRIGVFSVMYTVPATIVLACYFYEQAFRDTWEKTWLVQTCKGFAVPCPNYNFAPMSPDFTVFMIKYLMTMIVGITSSFWIWSGKTLQSWRRFYHRLSNGGKGETAV.

A signal peptide spans 1–19; sequence MFATVSLLFCLLLQPSPSA. Residues 20–230 are Extracellular-facing; the sequence is QQYHGEKGIS…EEEVRFARLW (211 aa). Residues 31-150 form the FZ domain; the sequence is PDHGFCQPIS…HGAGEICVGQ (120 aa). 5 disulfides stabilise this stretch: C36/C97, C44/C90, C81/C118, C107/C147, and C111/C135. N50 carries N-linked (GlcNAc...) asparagine glycosylation. Residue N151 is glycosylated (N-linked (GlcNAc...) asparagine). A helical membrane pass occupies residues 231-251; it reads VGIWAILCGISTLFTVLTYLV. Residues 252–262 lie on the Cytoplasmic side of the membrane; sequence DMRRFSYPERP. Residues 263–283 traverse the membrane as a helical segment; it reads IIFLSGCYFMVAVAYTAGFLL. The Extracellular portion of the chain corresponds to 284-310; it reads EERGVCVERFSEDSYRTVAQGTKKEGC. A helical transmembrane segment spans residues 311–331; that stretch reads TILFMILYFFGMASSIWWVIL. The Cytoplasmic segment spans residues 332–353; it reads SLTWFLAAGMKWGHEAIEANSQ. The chain crosses the membrane as a helical span at residues 354–374; sequence YFHLAAWAVPAVKTITILAMG. Residues 375 to 397 lie on the Extracellular side of the membrane; the sequence is QVDGDILSGVCYVGINSVDSLRG. A helical transmembrane segment spans residues 398–418; that stretch reads FVLAPLFVYLFIGTSFLLAGF. The Cytoplasmic segment spans residues 419–444; the sequence is VSLFRIRTIMKHDGTKTEKLEKLMVR. Residues 445 to 465 traverse the membrane as a helical segment; the sequence is IGVFSVMYTVPATIVLACYFY. Over 466 to 502 the chain is Extracellular; that stretch reads EQAFRDTWEKTWLVQTCKGFAVPCPNYNFAPMSPDFT. The helical transmembrane segment at 503 to 523 threads the bilayer; it reads VFMIKYLMTMIVGITSSFWIW. Topologically, residues 524–548 are cytoplasmic; it reads SGKTLQSWRRFYHRLSNGGKGETAV. The short motif at 526-531 is the Lys-Thr-X-X-X-Trp motif, mediates interaction with the PDZ domain of Dvl family members element; that stretch reads KTLQSW. A PDZ-binding motif is present at residues 546 to 548; that stretch reads TAV.

It belongs to the G-protein coupled receptor Fz/Smo family. As to quaternary structure, interacts with wnt11 and sdc4. The extracellular domain interacts with the extracellular domain of pcdh8/papc.

Its subcellular location is the cell membrane. It is found in the endosome membrane. Receptor for Wnt proteins. Acts in both canonical and non-canonical Wnt pathways. Although different papers report differing Wnt preferences, wnt5a, wnt8b and wnt11 have been proposed as synergists. In the canonical Wnt pathway, acts via beta-catenin to promote the expression of the dorsal genes siamois, twin and nodal3 and to establish the dorsal axis of the embryo and induce dorsal mesoderm formation. In a non-canonical Wnt/planar cell polarity (PCP) pathway, acts with sdc4 and dvl2/dsh to regulate convergent extension movements in gastrulation. Triggers phosphorylation of dvl2/dsh and its translocation to the plasma membrane. In a third branch of Wnt signaling, acts in a non-canonical pathway via trimeric G proteins, and independently of dvl2/dsh, to recruit protein kinase C (PKC) to the membrane and thus activate PKC. PKC signaling controls cell sorting and tissue separation during gastrulation. The protein is Frizzled-7 of Xenopus tropicalis (Western clawed frog).